Here is a 598-residue protein sequence, read N- to C-terminus: Aspartate--tRNA(Asp/Asn) ligase (598 aa).

L-aspartate is bound at residue Glu177. Residues 201-204 are aspartate; the sequence is QLFK. Arg223 lines the L-aspartate pocket. Residues 223-225 and Gln232 contribute to the ATP site; that span reads RDE. An L-aspartate-binding site is contributed by His456. Glu493 provides a ligand contact to ATP. L-aspartate is bound at residue Arg500. ATP is bound at residue 545–548; the sequence is GLDR.

This sequence belongs to the class-II aminoacyl-tRNA synthetase family. Type 1 subfamily. As to quaternary structure, homodimer.

The protein resides in the cytoplasm. It carries out the reaction tRNA(Asx) + L-aspartate + ATP = L-aspartyl-tRNA(Asx) + AMP + diphosphate. In terms of biological role, aspartyl-tRNA synthetase with relaxed tRNA specificity since it is able to aspartylate not only its cognate tRNA(Asp) but also tRNA(Asn). Reaction proceeds in two steps: L-aspartate is first activated by ATP to form Asp-AMP and then transferred to the acceptor end of tRNA(Asp/Asn). This is Aspartate--tRNA(Asp/Asn) ligase from Prochlorococcus marinus (strain MIT 9215).